The sequence spans 192 residues: Peptidyl-tRNA hydrolase (192 aa).

Residue Tyr16 coordinates tRNA. Catalysis depends on His21, which acts as the Proton acceptor. Tyr66 and Asn68 together coordinate tRNA.

Belongs to the PTH family. Monomer.

Its subcellular location is the cytoplasm. It catalyses the reaction an N-acyl-L-alpha-aminoacyl-tRNA + H2O = an N-acyl-L-amino acid + a tRNA + H(+). Functionally, hydrolyzes ribosome-free peptidyl-tRNAs (with 1 or more amino acids incorporated), which drop off the ribosome during protein synthesis, or as a result of ribosome stalling. Its function is as follows. Catalyzes the release of premature peptidyl moieties from peptidyl-tRNA molecules trapped in stalled 50S ribosomal subunits, and thus maintains levels of free tRNAs and 50S ribosomes. The sequence is that of Peptidyl-tRNA hydrolase from Aquifex aeolicus (strain VF5).